Consider the following 64-residue polypeptide: Large ribosomal subunit protein bL35 (64 aa).

Residues 1–22 (MPKMKSHTGMGKRVRVTGKGKI) show a composition bias toward basic residues. The disordered stretch occupies residues 1 to 28 (MPKMKSHTGMGKRVRVTGKGKIVKQQAG).

It belongs to the bacterial ribosomal protein bL35 family.

The sequence is that of Large ribosomal subunit protein bL35 from Salinispora tropica (strain ATCC BAA-916 / DSM 44818 / JCM 13857 / NBRC 105044 / CNB-440).